The primary structure comprises 198 residues: NADH-quinone oxidoreductase subunit B 1 (198 aa).

Residues Cys77, Cys78, Cys142, and Cys172 each coordinate [4Fe-4S] cluster.

Belongs to the complex I 20 kDa subunit family. In terms of assembly, NDH-1 is composed of 14 different subunits. Subunits NuoB, C, D, E, F, and G constitute the peripheral sector of the complex. The cofactor is [4Fe-4S] cluster.

It is found in the cell inner membrane. It catalyses the reaction a quinone + NADH + 5 H(+)(in) = a quinol + NAD(+) + 4 H(+)(out). In terms of biological role, NDH-1 shuttles electrons from NADH, via FMN and iron-sulfur (Fe-S) centers, to quinones in the respiratory chain. The immediate electron acceptor for the enzyme in this species is believed to be ubiquinone. Couples the redox reaction to proton translocation (for every two electrons transferred, four hydrogen ions are translocated across the cytoplasmic membrane), and thus conserves the redox energy in a proton gradient. The polypeptide is NADH-quinone oxidoreductase subunit B 1 (Rhodopseudomonas palustris (strain ATCC BAA-98 / CGA009)).